The chain runs to 284 residues: Pantothenate synthetase (284 aa).

Residue 30–37 (MGALHEGH) coordinates ATP. Residue His-37 is the Proton donor of the active site. Gln-61 provides a ligand contact to (R)-pantoate. Gln-61 provides a ligand contact to beta-alanine. 147 to 150 (GEKD) serves as a coordination point for ATP. Gln-153 is a binding site for (R)-pantoate. Residues Val-176 and 184–187 (TSSR) each bind ATP.

This sequence belongs to the pantothenate synthetase family. As to quaternary structure, homodimer.

The protein localises to the cytoplasm. It catalyses the reaction (R)-pantoate + beta-alanine + ATP = (R)-pantothenate + AMP + diphosphate + H(+). Its pathway is cofactor biosynthesis; (R)-pantothenate biosynthesis; (R)-pantothenate from (R)-pantoate and beta-alanine: step 1/1. Its function is as follows. Catalyzes the condensation of pantoate with beta-alanine in an ATP-dependent reaction via a pantoyl-adenylate intermediate. This Chlorobaculum tepidum (strain ATCC 49652 / DSM 12025 / NBRC 103806 / TLS) (Chlorobium tepidum) protein is Pantothenate synthetase.